A 186-amino-acid polypeptide reads, in one-letter code: Lipid A acyltransferase PagP (186 aa).

A signal peptide spans 1-25 (MNVSKYVAIFSFVFIQLISVGKVFA). Residues His58, Asp101, and Ser102 contribute to the active site.

It belongs to the lipid A palmitoyltransferase family. As to quaternary structure, homodimer.

It is found in the cell outer membrane. It catalyses the reaction a lipid A + a 1,2-diacyl-sn-glycero-3-phosphocholine = a hepta-acyl lipid A + a 2-acyl-sn-glycero-3-phosphocholine. It carries out the reaction a lipid IVA + a 1,2-diacyl-sn-glycero-3-phosphocholine = a lipid IVB + a 2-acyl-sn-glycero-3-phosphocholine. The enzyme catalyses a lipid IIA + a 1,2-diacyl-sn-glycero-3-phosphocholine = a lipid IIB + a 2-acyl-sn-glycero-3-phosphocholine. In terms of biological role, transfers a fatty acid residue from the sn-1 position of a phospholipid to the N-linked hydroxyfatty acid chain on the proximal unit of lipid A or its precursors. The polypeptide is Lipid A acyltransferase PagP (Shigella flexneri serotype X (strain 2002017)).